The primary structure comprises 155 residues: Ribosomal RNA large subunit methyltransferase H (155 aa).

Residues L72, G103, and 122-127 each bind S-adenosyl-L-methionine; that span reads LSDLTL.

This sequence belongs to the RNA methyltransferase RlmH family. Homodimer.

The protein localises to the cytoplasm. The catalysed reaction is pseudouridine(1915) in 23S rRNA + S-adenosyl-L-methionine = N(3)-methylpseudouridine(1915) in 23S rRNA + S-adenosyl-L-homocysteine + H(+). Specifically methylates the pseudouridine at position 1915 (m3Psi1915) in 23S rRNA. The protein is Ribosomal RNA large subunit methyltransferase H of Verminephrobacter eiseniae (strain EF01-2).